The following is a 268-amino-acid chain: MDTLVIAGKSYTSRLLLGTGKYKDFTETRAAVDVSGTQIITVAIRRTNIGQNPDEPNLLDVLPPSQFTLLPNTAGCYTAADAVRTLRLARELLDGHALVKLEVLGDQKTLFPDVVATLEAARILVKDGFHVMVYTSDDPIVARQLEDIGCAAIMPLASLIGSGMGILNPWNLQIIIDKVKVPVIVDAGVGTASDAAIAMELGCDGVLMNTAVASARNPILMASAMRKAVEAGREAWLAGRMPKKIYQATPSSPSEGMITGSPHSAANN.

K100 serves as the catalytic Schiff-base intermediate with DXP. 1-deoxy-D-xylulose 5-phosphate contacts are provided by residues G161, 187–188 (AG), and 209–210 (NT). Residues 248-268 (ATPSSPSEGMITGSPHSAANN) are disordered.

The protein belongs to the ThiG family. Homotetramer. Forms heterodimers with either ThiH or ThiS.

Its subcellular location is the cytoplasm. The enzyme catalyses [ThiS sulfur-carrier protein]-C-terminal-Gly-aminoethanethioate + 2-iminoacetate + 1-deoxy-D-xylulose 5-phosphate = [ThiS sulfur-carrier protein]-C-terminal Gly-Gly + 2-[(2R,5Z)-2-carboxy-4-methylthiazol-5(2H)-ylidene]ethyl phosphate + 2 H2O + H(+). It participates in cofactor biosynthesis; thiamine diphosphate biosynthesis. Catalyzes the rearrangement of 1-deoxy-D-xylulose 5-phosphate (DXP) to produce the thiazole phosphate moiety of thiamine. Sulfur is provided by the thiocarboxylate moiety of the carrier protein ThiS. In vitro, sulfur can be provided by H(2)S. This chain is Thiazole synthase, found in Nitrosomonas eutropha (strain DSM 101675 / C91 / Nm57).